Consider the following 92-residue polypeptide: Anti-CRISPR protein AcrF8 (92 aa).

Interacts with host rRNA-guided surveillance complex (Csy complex) used to recognize the invading DNA; this interaction prevents DNA hybridization in the Csy complex. Binds to a the Csy spiral backbone.

Inhibited by phage protein Aca2 repressor (AC H9C180) both at the transcription and translatio levels. Its function is as follows. Anti-CRISPR protein that inactivates the type I-F CRISPR-Cas systems of the host by blocking its ability to recognize target DNA. Inhibits therefore the degradation of the viral DNA by the host. This is Anti-CRISPR protein AcrF8 from Pectobacterium phage ZF40 (Bacteriophage ZF40).